The primary structure comprises 278 residues: Putative peptidase Cgl1093 (278 aa).

The signal sequence occupies residues 1-32 (MSSASFTTKALSVLAALTAASAPLVAASPAHA). Positions 33-236 (LANARNVTGS…HAEWIAYYTG (204 aa)) constitute a Peptidase S1 domain. Cys-59 and Cys-75 are joined by a disulfide. Active-site charge relay system residues include His-74, Asp-123, and Ser-189.

The protein belongs to the peptidase S1 family.

It is found in the secreted. The polypeptide is Putative peptidase Cgl1093 (Corynebacterium glutamicum (strain ATCC 13032 / DSM 20300 / JCM 1318 / BCRC 11384 / CCUG 27702 / LMG 3730 / NBRC 12168 / NCIMB 10025 / NRRL B-2784 / 534)).